The sequence spans 21 residues: Hemocyanin subunit 4 (21 aa).

This sequence belongs to the tyrosinase family. Hemocyanin subfamily. Hemolymph.

It is found in the secreted. The protein resides in the extracellular space. In terms of biological role, hemocyanins are copper-containing oxygen carriers occurring freely dissolved in the hemolymph of many mollusks and arthropods. The protein is Hemocyanin subunit 4 of Maja squinado (Mediterranean spider crab).